Consider the following 107-residue polypeptide: Integration host factor (107 aa).

Residues 1–20 (MALPPLTPEQRAAALEKAAA) form a disordered region. A compositionally biased stretch (low complexity) spans 9 to 18 (EQRAAALEKA). K54 lines the DNA pocket. The short motif at 64-71 (LPGVGKVR) is the H2TH motif, binds DNA element. DNA is bound by residues S82, R85, R88, S92, N93, and Q94. Positions 82 to 94 (SESRRVRGLGSNQ) are lid, binds DNA.

This sequence belongs to the actinobacterial IHF (aIHF) family. Monomer.

It is found in the cytoplasm. It localises to the spore. The protein resides in the nucleoid. Its function is as follows. A nucleoid-associated protein (NAP) that probably plays a role in chromosome compactation. Contributes to development and secondary metabolism, but is dispensable for growth and viability. Binds to the promoter region of a number of genes (including itself); multiple molecules of the protein bind to the DNA simultaneously, deletion alters the expression of about 30 genes (both up- and down-regulation occurs). Plays a role in controlling viability. Binds dsDNA without any obvious sequence specificity, in a concentration and length-dependent manner. Promotes supercoiling in a topoisomerase-dependent manner (counteracts TopA plasmid relaxation). Binds DNA as a monomer, contacting 8 base pairs via the phosphate backbone; each monomer can bind 2 DNA duplexes, allowing a bridging function. Alters DNA topology, constraining negative supercoils, possibly by DNA twist. Longer dsDNA binds more than one sIHF subunit. In Streptomyces coelicolor (strain ATCC BAA-471 / A3(2) / M145), this protein is Integration host factor.